We begin with the raw amino-acid sequence, 324 residues long: 2-oxoisovalerate dehydrogenase subunit beta (324 aa).

Thiamine diphosphate contacts are provided by residues Glu29, 58 to 60 (LSE), Gln82, and 86 to 89 (YIFP). Substrate-binding positions include 83–86 (FADY) and His129. The Proton acceptor role is filled by His129.

As to quaternary structure, heterotetramer of two alpha and two beta chains. Directly associated with ODBA in the E1 complex. Requires thiamine diphosphate as cofactor.

The enzyme catalyses N(6)-[(R)-lipoyl]-L-lysyl-[protein] + 3-methyl-2-oxobutanoate + H(+) = N(6)-[(R)-S(8)-2-methylpropanoyldihydrolipoyl]-L-lysyl-[protein] + CO2. Functionally, the branched-chain alpha-keto dehydrogenase complex catalyzes the overall conversion of alpha-keto acids to acyl-CoA and CO(2). It contains multiple copies of three enzymatic components: branched-chain alpha-keto acid decarboxylase (E1), lipoamide acyltransferase (E2) and lipoamide dehydrogenase (E3). This Thermus thermophilus (strain ATCC BAA-163 / DSM 7039 / HB27) protein is 2-oxoisovalerate dehydrogenase subunit beta.